Here is a 412-residue protein sequence, read N- to C-terminus: Cathepsin D (412 aa).

Residues 1–20 (MQPSSLLPLALCLLAAPASA) form the signal peptide. The propeptide at 21–64 (LVRIPLHKFTSIRRTMSEVGGSVEDLIAKGPVSKYSQAVPAVTE) is activation peptide. An O-linked (GalNAc...) threonine glycan is attached at threonine 63. The 329-residue stretch at 79–407 (YYGEIGIGTP…DRDNNRVGFA (329 aa)) folds into the Peptidase A1 domain. Cystine bridges form between cysteine 91–cysteine 160 and cysteine 110–cysteine 117. Aspartate 97 is an active-site residue. Residues asparagine 134 and asparagine 263 are each glycosylated (N-linked (GlcNAc...) asparagine). Cysteine 286 and cysteine 290 form a disulfide bridge. Aspartate 295 is an active-site residue. An intrachain disulfide couples cysteine 329 to cysteine 366.

The protein belongs to the peptidase A1 family. Consists of a light chain and a heavy chain. Interacts with ADAM30; this leads to activation of CTSD. Interacts with GRN; stabilizes CTSD; increases its proteolytic activity. Post-translationally, N- and O-glycosylated. In terms of processing, undergoes proteolytic cleavage and activation by ADAM30. As well as the major heavy chain which starts at Leu-169, 2 minor forms starting at Gly-170 and Gly-171 have been identified. An additional form starting at Ala-168 has also been identified. In terms of tissue distribution, expressed in the aorta extracellular space (at protein level). Expressed in liver (at protein level).

It localises to the lysosome. Its subcellular location is the melanosome. The protein resides in the secreted. The protein localises to the extracellular space. It catalyses the reaction Specificity similar to, but narrower than, that of pepsin A. Does not cleave the 4-Gln-|-His-5 bond in B chain of insulin.. In terms of biological role, acid protease active in intracellular protein breakdown. Plays a role in APP processing following cleavage and activation by ADAM30 which leads to APP degradation. Involved in the pathogenesis of several diseases such as breast cancer and possibly Alzheimer disease. This is Cathepsin D (CTSD) from Homo sapiens (Human).